We begin with the raw amino-acid sequence, 553 residues long: Methionine--tRNA ligase (553 aa).

The short motif at 12 to 22 (PYANSQLHLGH) is the 'HIGH' region element. Cys144, Cys147, Cys157, and Cys160 together coordinate Zn(2+). The short motif at 332 to 336 (KFSKS) is the 'KMSKS' region element. ATP is bound at residue Lys335.

The protein belongs to the class-I aminoacyl-tRNA synthetase family. MetG type 1 subfamily. As to quaternary structure, monomer. The cofactor is Zn(2+).

It is found in the cytoplasm. It catalyses the reaction tRNA(Met) + L-methionine + ATP = L-methionyl-tRNA(Met) + AMP + diphosphate. Is required not only for elongation of protein synthesis but also for the initiation of all mRNA translation through initiator tRNA(fMet) aminoacylation. The protein is Methionine--tRNA ligase of Dehalococcoides mccartyi (strain ATCC BAA-2266 / KCTC 15142 / 195) (Dehalococcoides ethenogenes (strain 195)).